The following is a 449-amino-acid chain: tRNA-2-methylthio-N(6)-dimethylallyladenosine synthase (449 aa).

The MTTase N-terminal domain maps to 7-124 (DAFYIHTFGC…LPLLIKQVQQ (118 aa)). Residues Cys-16, Cys-52, Cys-87, Cys-163, Cys-167, and Cys-170 each contribute to the [4Fe-4S] cluster site. The region spanning 149-379 (RSSSMSAFVP…IECQNRISAS (231 aa)) is the Radical SAM core domain. Residues 382-445 (SQAVGSVVEV…SATLLGEPLI (64 aa)) enclose the TRAM domain.

Belongs to the methylthiotransferase family. MiaB subfamily. In terms of assembly, monomer. Requires [4Fe-4S] cluster as cofactor.

Its subcellular location is the cytoplasm. It catalyses the reaction N(6)-dimethylallyladenosine(37) in tRNA + (sulfur carrier)-SH + AH2 + 2 S-adenosyl-L-methionine = 2-methylsulfanyl-N(6)-dimethylallyladenosine(37) in tRNA + (sulfur carrier)-H + 5'-deoxyadenosine + L-methionine + A + S-adenosyl-L-homocysteine + 2 H(+). Functionally, catalyzes the methylthiolation of N6-(dimethylallyl)adenosine (i(6)A), leading to the formation of 2-methylthio-N6-(dimethylallyl)adenosine (ms(2)i(6)A) at position 37 in tRNAs that read codons beginning with uridine. This Chlorobium chlorochromatii (strain CaD3) protein is tRNA-2-methylthio-N(6)-dimethylallyladenosine synthase.